The sequence spans 550 residues: Hydroxylamine reductase (550 aa).

[2Fe-2S] cluster is bound by residues C4, C7, C19, and C26. Positions 249, 273, 317, 405, 433, 458, 492, and 494 each coordinate hybrid [4Fe-2O-2S] cluster. A Cysteine persulfide modification is found at C405.

This sequence belongs to the HCP family. It depends on [2Fe-2S] cluster as a cofactor. The cofactor is hybrid [4Fe-2O-2S] cluster.

It is found in the cytoplasm. It catalyses the reaction A + NH4(+) + H2O = hydroxylamine + AH2 + H(+). Catalyzes the reduction of hydroxylamine to form NH(3) and H(2)O. The polypeptide is Hydroxylamine reductase (Aeromonas salmonicida (strain A449)).